Here is a 141-residue protein sequence, read N- to C-terminus: Hemoglobin subunit alpha-2 (141 aa).

Residues 1 to 141 (VLSSQDKANV…VKHVLTSKYR (141 aa)) form the Globin domain. O2 is bound at residue His-58. His-87 contacts heme b.

The protein belongs to the globin family. In terms of assembly, minor hemoglobin is a heterotetramer of two alpha-2 chains and two beta-2 chains. Red blood cells.

Its function is as follows. Involved in oxygen transport from the lung to the various peripheral tissues. The chain is Hemoglobin subunit alpha-2 from Triturus cristatus (Great crested newt).